The sequence spans 474 residues: tRNA modification GTPase MnmE (474 aa).

The (6S)-5-formyl-5,6,7,8-tetrahydrofolate site is built by arginine 25, glutamate 82, and lysine 123. In terms of domain architecture, TrmE-type G spans 219–386 (GIKVVIAGKP…LKKHLYDSAM (168 aa)). Asparagine 229 lines the K(+) pocket. GTP is bound by residues 229–234 (NAGKSS), 248–254 (SNISGTT), and 273–276 (DTAG). Serine 233 provides a ligand contact to Mg(2+). Residues serine 248, isoleucine 250, and threonine 253 each contribute to the K(+) site. A Mg(2+)-binding site is contributed by threonine 254. Residue lysine 474 coordinates (6S)-5-formyl-5,6,7,8-tetrahydrofolate.

The protein belongs to the TRAFAC class TrmE-Era-EngA-EngB-Septin-like GTPase superfamily. TrmE GTPase family. Homodimer. Heterotetramer of two MnmE and two MnmG subunits. K(+) serves as cofactor.

Its subcellular location is the cytoplasm. In terms of biological role, exhibits a very high intrinsic GTPase hydrolysis rate. Involved in the addition of a carboxymethylaminomethyl (cmnm) group at the wobble position (U34) of certain tRNAs, forming tRNA-cmnm(5)s(2)U34. The polypeptide is tRNA modification GTPase MnmE (Blochmanniella floridana).